The following is a 1192-amino-acid chain: Outer capsid protein VP2 (1192 aa).

The interval 1112 to 1192 (IDQFMLDDMP…QSVAKPGIVR (81 aa)) is disordered. The span at 1140-1150 (PSAAANTEAST) shows a compositional bias: low complexity. The segment covering 1159–1183 (NVVSPTVPGQPSQTPVNPNQSTELQ) has biased composition (polar residues).

The protein localises to the virion. It catalyses the reaction a 5'-end diphospho-ribonucleoside in mRNA + GTP + H(+) = a 5'-end (5'-triphosphoguanosine)-ribonucleoside in mRNA + diphosphate. The enzyme catalyses a 5'-end (5'-triphosphoguanosine)-ribonucleoside in mRNA + S-adenosyl-L-methionine = a 5'-end (N(7)-methyl 5'-triphosphoguanosine)-ribonucleoside in mRNA + S-adenosyl-L-homocysteine. Outer capsid protein involved in mRNA capping. Catalyzes the last 3 enzymatic activities for formation of the 5' cap structure on the viral plus-strand transcripts, namely the RNA guanylyltransferase, RNA-7N- and RNA-2'O-methyltransferase activities. The protein is Outer capsid protein VP2 (S2) of Rice ragged stunt virus (isolate Thailand) (RRSV).